Reading from the N-terminus, the 302-residue chain is GTPase Era (302 aa).

Positions 4–171 (KAGFVALVGR…KEKIVSLLPE (168 aa)) constitute an Era-type G domain. The segment at 12-19 (GRTNVGKS) is G1. 12–19 (GRTNVGKS) contributes to the GTP binding site. The interval 38–42 (QTTRN) is G2. The G3 stretch occupies residues 59-62 (DTPG). Residues 59–63 (DTPGI) and 121–124 (NKID) each bind GTP. The segment at 121-124 (NKID) is G4. The tract at residues 150–152 (ISA) is G5. The region spanning 202–280 (LEEEVPHGVY…FLDLWVKTRK (79 aa)) is the KH type-2 domain.

This sequence belongs to the TRAFAC class TrmE-Era-EngA-EngB-Septin-like GTPase superfamily. Era GTPase family. As to quaternary structure, monomer.

It localises to the cytoplasm. The protein resides in the cell membrane. Its function is as follows. An essential GTPase that binds both GDP and GTP, with rapid nucleotide exchange. Plays a role in 16S rRNA processing and 30S ribosomal subunit biogenesis and possibly also in cell cycle regulation and energy metabolism. This Thermoanaerobacter pseudethanolicus (strain ATCC 33223 / 39E) (Clostridium thermohydrosulfuricum) protein is GTPase Era.